Here is a 107-residue protein sequence, read N- to C-terminus: EPIDERMAL PATTERNING FACTOR-like protein 5 (107 aa).

Residues 1–22 (MGVVLPTLIVYAFLLFFSSSSA) form the signal peptide. Cystine bridges form between C64/C98, C68/C74, and C71/C100.

This sequence belongs to the plant cysteine rich small secretory peptide family. Epidermal patterning factor subfamily. As to quaternary structure, interacts with ERECTA. Expressed asymetically in the hypocotyl, on the side proximal to the folded cotyledons at germination. Detected in developing flowers, the chalazal region of ovules and near the root apex, but not in inflorescence stems. Expressed in cotyledons, flowers, adult leaves and fruits.

It localises to the secreted. Controls stomatal patterning. Mediates differentiation of stomatal lineage cells to pavement cells and stomatal development inhibition. TMM (AC Q9SSD1) functions to dampen or block CLL1 signaling. Acts as a growth-regulatory ligand for ERECTA family receptors. Promotes fruit growth and fertility. This is EPIDERMAL PATTERNING FACTOR-like protein 5 from Arabidopsis thaliana (Mouse-ear cress).